The primary structure comprises 210 residues: MARRSQGTKLHLAVLCLVVSCHAIGLSDLMERASQRSDKLHSLSTSLNKDLDSHFPPMGRVMMPRPSMCHTSSLQIPKDKEQALRVSENELISLARSLLLAWNDPLLLLSSEAPTLPHPSNGDISSKIRELQDYSKSLGDGLDILVNKMGPSSQYISLIPFKGGDLGNDKTSRLINFHFLMSCFRRDSHKIDSFLKVLRCRATKMRPETC.

The signal sequence occupies residues M1–A23. 2 disulfides stabilise this stretch: C69-C183 and C200-C210.

Belongs to the somatotropin/prolactin family.

It is found in the secreted. The sequence is that of Prolactin-2 (prl2) from Oncorhynchus tshawytscha (Chinook salmon).